The following is a 430-amino-acid chain: Enolase (430 aa).

Gln-167 is a binding site for (2R)-2-phosphoglycerate. Residue Glu-209 is the Proton donor of the active site. Mg(2+) is bound by residues Asp-245, Glu-286, and Asp-313. Positions 338, 367, 368, and 389 each coordinate (2R)-2-phosphoglycerate. The Proton acceptor role is filled by Lys-338.

It belongs to the enolase family. The cofactor is Mg(2+).

It localises to the cytoplasm. The protein resides in the secreted. It is found in the cell surface. The catalysed reaction is (2R)-2-phosphoglycerate = phosphoenolpyruvate + H2O. It functions in the pathway carbohydrate degradation; glycolysis; pyruvate from D-glyceraldehyde 3-phosphate: step 4/5. Functionally, catalyzes the reversible conversion of 2-phosphoglycerate (2-PG) into phosphoenolpyruvate (PEP). It is essential for the degradation of carbohydrates via glycolysis. In Synechococcus sp. (strain CC9902), this protein is Enolase.